The sequence spans 1793 residues: Transposon Ty1-H Gag-Pol polyprotein (1793 aa).

Composition is skewed to polar residues over residues 1-10, 48-60, and 127-152; these read MESQQLSNYP, TKAN…TPAS, and QSQF…GNTF. Disordered stretches follow at residues 1-84, 126-174, and 390-459; these read MESQ…QNGP, PQSQ…PPPM, and GSRN…SKST. Low complexity predominate over residues 153–165; that stretch reads TDSSSADSDMTST. An RNA-binding region spans residues 337-439; sequence NNGIHINNKV…NSKSKTARAH (103 aa). A compositionally biased stretch (low complexity) spans 440–456; it reads NVSTSNNSPSTDNDSIS. Catalysis depends on D499, which acts as the For protease activity; shared with dimeric partner. The interval 621 to 678 is integrase-type zinc finger-like; it reads NVHTSESTRKYPYPFIHRMLAHANAQTIRYSLKNNTITYFNESDVDWSSAIDYQCPDC. The region spanning 698–873 is the Integrase catalytic domain; sequence NSYEPFQYLH…AGLDISTLLP (176 aa). Mg(2+)-binding residues include D709 and D774. The interval 996–1208 is disordered; sequence AVSPTDSTPP…SSLGGIGDSN (213 aa). Over residues 998–1007 the composition is skewed to low complexity; it reads SPTDSTPPST. Over residues 1043 to 1053 the composition is skewed to polar residues; the sequence is STPQISDIEST. A compositionally biased stretch (basic and acidic residues) spans 1076–1091; it reads ESSHASKSKDFRHSDS. Composition is skewed to polar residues over residues 1092–1120 and 1133–1144; these read YSDN…QTSE and SIDTSSSESNSL. The short motif at 1216–1250 is the Bipartite nuclear localization signal element; the sequence is KKRSLEDNETEIKVSRDTWNTKNMRSLEPPRSKKR. In terms of domain architecture, Reverse transcriptase Ty1/copia-type spans 1376–1514; it reads NNYYITQLDI…DILGLEIKYQ (139 aa). Residues D1384, D1465, D1466, D1648, E1690, and D1723 each contribute to the Mg(2+) site. Residues 1648-1790 enclose the RNase H Ty1/copia-type domain; it reads DASYGNQPYY…IKTFKLLTNK (143 aa).

In terms of assembly, the capsid protein forms a homotrimer, from which the VLPs are assembled. The protease is a homodimer, whose active site consists of two apposed aspartic acid residues. In terms of processing, initially, virus-like particles (VLPs) are composed of the structural unprocessed proteins Gag and Gag-Pol, and also contain the host initiator methionine tRNA (tRNA(i)-Met) which serves as a primer for minus-strand DNA synthesis, and a dimer of genomic Ty RNA. Processing of the polyproteins occurs within the particle and proceeds by an ordered pathway, called maturation. First, the protease (PR) is released by autocatalytic cleavage of the Gag-Pol polyprotein yielding capsid protein p45 and a Pol-p154 precursor protein. This cleavage is a prerequisite for subsequent processing of Pol-p154 at the remaining sites to release the mature structural and catalytic proteins. Maturation takes place prior to the RT reaction and is required to produce transposition-competent VLPs.

Its subcellular location is the cytoplasm. The protein localises to the nucleus. The enzyme catalyses DNA(n) + a 2'-deoxyribonucleoside 5'-triphosphate = DNA(n+1) + diphosphate. The catalysed reaction is Endonucleolytic cleavage to 5'-phosphomonoester.. Its function is as follows. Capsid protein (CA) is the structural component of the virus-like particle (VLP), forming the shell that encapsulates the retrotransposons dimeric RNA genome. The particles are assembled from trimer-clustered units and there are holes in the capsid shells that allow for the diffusion of macromolecules. CA also has nucleocapsid-like chaperone activity, promoting primer tRNA(i)-Met annealing to the multipartite primer-binding site (PBS), dimerization of Ty1 RNA and initiation of reverse transcription. Functionally, the aspartyl protease (PR) mediates the proteolytic cleavages of the Gag and Gag-Pol polyproteins after assembly of the VLP. In terms of biological role, reverse transcriptase/ribonuclease H (RT) is a multifunctional enzyme that catalyzes the conversion of the retro-elements RNA genome into dsDNA within the VLP. The enzyme displays a DNA polymerase activity that can copy either DNA or RNA templates, and a ribonuclease H (RNase H) activity that cleaves the RNA strand of RNA-DNA heteroduplexes during plus-strand synthesis and hydrolyzes RNA primers. The conversion leads to a linear dsDNA copy of the retrotransposon that includes long terminal repeats (LTRs) at both ends. Integrase (IN) targets the VLP to the nucleus, where a subparticle preintegration complex (PIC) containing at least integrase and the newly synthesized dsDNA copy of the retrotransposon must transit the nuclear membrane. Once in the nucleus, integrase performs the integration of the dsDNA into the host genome. The chain is Transposon Ty1-H Gag-Pol polyprotein (TY1B-H) from Saccharomyces cerevisiae (strain ATCC 204508 / S288c) (Baker's yeast).